Reading from the N-terminus, the 288-residue chain is Bifunctional protein FolD (288 aa).

Residues 166-168 and Ile-232 each bind NADP(+); that span reads GAS.

This sequence belongs to the tetrahydrofolate dehydrogenase/cyclohydrolase family. In terms of assembly, homodimer.

The catalysed reaction is (6R)-5,10-methylene-5,6,7,8-tetrahydrofolate + NADP(+) = (6R)-5,10-methenyltetrahydrofolate + NADPH. It carries out the reaction (6R)-5,10-methenyltetrahydrofolate + H2O = (6R)-10-formyltetrahydrofolate + H(+). It participates in one-carbon metabolism; tetrahydrofolate interconversion. Its function is as follows. Catalyzes the oxidation of 5,10-methylenetetrahydrofolate to 5,10-methenyltetrahydrofolate and then the hydrolysis of 5,10-methenyltetrahydrofolate to 10-formyltetrahydrofolate. This is Bifunctional protein FolD from Citrobacter koseri (strain ATCC BAA-895 / CDC 4225-83 / SGSC4696).